A 200-amino-acid chain; its full sequence is Large ribosomal subunit protein uL4 (200 aa).

Positions 43–71 (RAQKTRAEVSGSGKKPWRQKGTGRARSGD) are disordered.

The protein belongs to the universal ribosomal protein uL4 family. Part of the 50S ribosomal subunit.

In terms of biological role, one of the primary rRNA binding proteins, this protein initially binds near the 5'-end of the 23S rRNA. It is important during the early stages of 50S assembly. It makes multiple contacts with different domains of the 23S rRNA in the assembled 50S subunit and ribosome. Functionally, forms part of the polypeptide exit tunnel. The polypeptide is Large ribosomal subunit protein uL4 (Actinobacillus pleuropneumoniae serotype 5b (strain L20)).